The chain runs to 292 residues: Siderophore triacetylfusarinine C esterase (292 aa).

Positions 97, 148, 149, 174, 176, and 267 each coordinate triacetylfusarinine C.

Belongs to the esterase D family.

It localises to the cytoplasm. It catalyses the reaction triacetylfusarinine C + 3 H2O = 3 N-acetylfusarinine + Fe(3+). Displays specific triacetylfusarinine C (TAFC) esterase activity but does not hydrolyze fusarinine C, which has the same core structure as TAFC. Hydrolysis optimizes but is not essential for TAFC-mediated iron uptake. Both extra- and intracellular siderophores have been shown to be crucial for the virulence. Subsequent to chelation of iron and uptake, FsC and TAFC are hydrolyzed and the iron is transferred to the metabolism or to the intracellular siderophore ferricrocin (FC) for transport and storage of iron. Hydrolyzes both TAFC and DF-TAFC with equal efficiencies, suggesting that its function might not be restricted to the release of iron from the siderophore but might also include the degradation of the iron-free chelator to protect cells. This chain is Siderophore triacetylfusarinine C esterase, found in Aspergillus fumigatus (strain ATCC MYA-4609 / CBS 101355 / FGSC A1100 / Af293) (Neosartorya fumigata).